Consider the following 347-residue polypeptide: Ileal sodium/bile acid cotransporter (347 aa).

The Extracellular portion of the chain corresponds to 1-29 (MSNLTVGCLANATVCEGASCVAPESNFNA). Residues N3 and N11 are each glycosylated (N-linked (GlcNAc...) asparagine). A helical membrane pass occupies residues 30–50 (ILSVVLSTVLTILLALVMFSM). The Cytoplasmic segment spans residues 51–83 (GCNVEIKKFLGHIRRPWGIFIGFLCQFGIMPLT). Residues 84 to 104 (GFVLAVAFGIMPIQAVVVLIM) form a helical membrane-spanning segment. The Extracellular segment spans residues 105–127 (GCCPGGTASNILAYWVDGDMDLS). The helical transmembrane segment at 128-148 (VSMTTCSTLLALGMMPLCLYV) threads the bilayer. Over 149-158 (YTKMWVDSGT) the chain is Cytoplasmic. Residues 159–179 (IVIPYDNIGTSLVALVVPVSI) form a helical membrane-spanning segment. Topologically, residues 180 to 196 (GMFVNHKWPQKAKIILK) are extracellular. A helical transmembrane segment spans residues 197–217 (VGSIAGAVLIVLIAVVGGILY). The Cytoplasmic segment spans residues 218–225 (QSAWIIEP). The helical transmembrane segment at 226–246 (KLWIIGTIFPMAGYSLGFFLA) threads the bilayer. At 247-289 (RIAGQPWYRCRTVALETGMQNTQLCSTIVQLSFSPEDLTYVFT) the chain is on the extracellular side. Residues 290 to 310 (FPLIYSIFQIAFAAIFLGIYV) form a helical membrane-spanning segment. Residues 311-347 (AYRKCHGKNDAEFPDIKDTKTEPESSFHQMNGGFQPE) are Cytoplasmic-facing. The segment covering 323–335 (FPDIKDTKTEPES) has biased composition (basic and acidic residues). The tract at residues 323–347 (FPDIKDTKTEPESSFHQMNGGFQPE) is disordered. S336 carries the post-translational modification Phosphoserine.

The protein belongs to the bile acid:sodium symporter (BASS) (TC 2.A.28) family. Monomer and homodimer.

Its subcellular location is the membrane. It catalyses the reaction taurocholate(out) + 2 Na(+)(out) = taurocholate(in) + 2 Na(+)(in). The catalysed reaction is cholate(out) + 2 Na(+)(out) = cholate(in) + 2 Na(+)(in). It carries out the reaction taurochenodeoxycholate(out) + 2 Na(+)(out) = taurochenodeoxycholate(in) + 2 Na(+)(in). The enzyme catalyses tauroursodeoxycholate(out) + 2 Na(+)(out) = tauroursodeoxycholate(in) + 2 Na(+)(in). It catalyses the reaction glycocholate(out) + 2 Na(+)(out) = glycocholate(in) + 2 Na(+)(in). The catalysed reaction is tauronorcholate(out) + 2 Na(+)(out) = tauronorcholate(in) + 2 Na(+)(in). It carries out the reaction tauroallocholate(out) + 2 Na(+)(out) = tauroallocholate(in) + 2 Na(+)(in). The enzyme catalyses taurodeoxycholate(out) + 2 Na(+)(out) = taurodeoxycholate(in) + 2 Na(+)(in). It catalyses the reaction tauro-beta-muricholate(out) + 2 Na(+)(out) = tauro-beta-muricholate(in) + 2 Na(+)(in). Its function is as follows. Plays a critical role in the sodium-dependent reabsorption of bile acids from the lumen of the small intestine. Transports various bile acids, unconjugated or conjugated, such as cholate and taurocholate. Also responsible for bile acid transport in the renal proximal tubules, a salvage mechanism that helps conserve bile acids. Works collaboratively with the Na(+)-taurocholate cotransporting polypeptide (NTCP), the organic solute transporter (OST), and the bile salt export pump (BSEP), to ensure efficacious biological recycling of bile acids during enterohepatic circulation. This is Ileal sodium/bile acid cotransporter (SLC10A2) from Oryctolagus cuniculus (Rabbit).